The chain runs to 440 residues: Chromosomal replication initiator protein DnaA (440 aa).

The tract at residues 1–74 (MNPSQILENL…VQSGNKAIIN (74 aa)) is domain I, interacts with DnaA modulators. A domain II region spans residues 74 to 99 (NIQAQSAKQSNKSTKIDIAHIKAQST). Residues 100-316 (ILNPSFTFDS…GIIISLNAYA (217 aa)) are domain III, AAA+ region. Residues glycine 146, glycine 148, lysine 149, and threonine 150 each coordinate ATP. A domain IV, binds dsDNA region spans residues 317 to 440 (TILGQEITLE…KNKILVKSQS (124 aa)).

This sequence belongs to the DnaA family. As to quaternary structure, oligomerizes as a right-handed, spiral filament on DNA at oriC.

The protein resides in the cytoplasm. Plays an essential role in the initiation and regulation of chromosomal replication. ATP-DnaA binds to the origin of replication (oriC) to initiate formation of the DNA replication initiation complex once per cell cycle. Binds the DnaA box (a 9 base pair repeat at the origin) and separates the double-stranded (ds)DNA. Forms a right-handed helical filament on oriC DNA; dsDNA binds to the exterior of the filament while single-stranded (ss)DNA is stabiized in the filament's interior. The ATP-DnaA-oriC complex binds and stabilizes one strand of the AT-rich DNA unwinding element (DUE), permitting loading of DNA polymerase. After initiation quickly degrades to an ADP-DnaA complex that is not apt for DNA replication. Binds acidic phospholipids. The protein is Chromosomal replication initiator protein DnaA of Campylobacter jejuni subsp. jejuni serotype O:23/36 (strain 81-176).